A 313-amino-acid chain; its full sequence is Glucosyl-dolichyl phosphate glucuronosyltransferase (313 aa).

Residues 284 to 304 form a helical membrane-spanning segment; that stretch reads LIAIFVFTAAVGFGYVYGLLT.

The protein belongs to the glycosyltransferase 2 family.

It localises to the cell membrane. The catalysed reaction is an archaeal dolichyl alpha-D-glucosyl phosphate + UDP-alpha-D-glucuronate = an archaeal dolichyl beta-D-glucuronosyl-(1-&gt;4)-alpha-D-glucosyl phosphate + UDP + H(+). It functions in the pathway cell surface structure biogenesis; S-layer biogenesis. Involved in the protein N-glycosylation pathway responsible for the assembly and attachment of an N-linked pentasaccharide that decorates the S-layer glycoprotein and flagellins. Catalyzes the transfer of a glucuronate residue (GlcA) to a glucose residue already bound to a dolichol phosphate (DolP), a compound that serves as a glycan lipid carrier in Archaea. In vitro, is able to add GlcA to DolP-Glc in which the omega-position isoprene is not saturated. However, the likely physiological lipid substrate is alpha,omega-saturated. The polypeptide is Glucosyl-dolichyl phosphate glucuronosyltransferase (Haloferax volcanii (strain ATCC 29605 / DSM 3757 / JCM 8879 / NBRC 14742 / NCIMB 2012 / VKM B-1768 / DS2) (Halobacterium volcanii)).